The sequence spans 411 residues: Acetylornithine aminotransferase (411 aa).

Pyridoxal 5'-phosphate-binding positions include 107–108 (GT) and Phe-141. A N(2)-acetyl-L-ornithine-binding site is contributed by Arg-144. 227–230 (DEIQ) serves as a coordination point for pyridoxal 5'-phosphate. The residue at position 256 (Lys-256) is an N6-(pyridoxal phosphate)lysine. Thr-284 is a binding site for N(2)-acetyl-L-ornithine. Thr-285 serves as a coordination point for pyridoxal 5'-phosphate.

It belongs to the class-III pyridoxal-phosphate-dependent aminotransferase family. ArgD subfamily. As to quaternary structure, homodimer. The cofactor is pyridoxal 5'-phosphate.

The protein resides in the cytoplasm. It catalyses the reaction N(2)-acetyl-L-ornithine + 2-oxoglutarate = N-acetyl-L-glutamate 5-semialdehyde + L-glutamate. It functions in the pathway amino-acid biosynthesis; L-arginine biosynthesis; N(2)-acetyl-L-ornithine from L-glutamate: step 4/4. This Xylella fastidiosa (strain Temecula1 / ATCC 700964) protein is Acetylornithine aminotransferase.